A 373-amino-acid polypeptide reads, in one-letter code: MEDFIYYNGKKYRKGYTTGTCAAAAAKACVEMILTQEEVSAVQVTTTGGTILEIPVAYQKFSKDKATAAVQKDGGDDIDATHGMWIFVDVDLTDNAEVVLDGGVGIGRATQKGISVAVGEAAINPAPRKNILATVRESLGENRGAKILVYAPEGEERAKRTMNSNLGIIGGISILGTTGIVTPMSDEGWKKSLSMELEMKRNQGLDQIILVPGNYGDDFVQNTLGFSSGNIVSMSNFVGYMLKETQRLAFKKVLMVGHFGKLVKVSAGIFTTYSKDADARAEILVANLALLGAPLSLLQAVEKCNTTEAAGELIEEAGFTQVYDVIVQKIKARSERFLKFTKPSVEVDVVTFSTERGLLAATKDIDVLREEWR.

It belongs to the CbiD family.

The enzyme catalyses Co-precorrin-5B + S-adenosyl-L-methionine = Co-precorrin-6A + S-adenosyl-L-homocysteine. It functions in the pathway cofactor biosynthesis; adenosylcobalamin biosynthesis; cob(II)yrinate a,c-diamide from sirohydrochlorin (anaerobic route): step 6/10. Catalyzes the methylation of C-1 in cobalt-precorrin-5B to form cobalt-precorrin-6A. The sequence is that of Cobalt-precorrin-5B C(1)-methyltransferase from Listeria monocytogenes serotype 4b (strain CLIP80459).